Consider the following 413-residue polypeptide: MSENCNSRHFSWLMKSCLPNPSDAKSLVQIHQPSSTAANSSATIASLPDDLLLECISRVPSSSIPSLAVVCRRWSRLLHSPYFLHLRRRLGLLRHSLFAISTVDSGLFAADLQFQSEIASWKVSLAVSSRSVGVDGSYGSLSHARAAAIGPRVYVVSRNAVLRYDSWMGTLNLRSPMIFPRKKFAIAVVSGKIYVAGGGGGSEVAAAVEEYDPELNRWEVVTQSARKRYGCIGAAVDGVFYVIGGLKIGNETSRAVAARAYASSMDLFDVESRQWLRSRSVPGGGCVVAACAAVGYVYVLTSHAVELSFWRFDARRRGGNSGFGEWQRLKSPPLPAQVRLDGTVRFSCVGVEDKVAVVQVVGCIDDLLRRSGRGERGIRESLVLLYDTTEGEWRRAADLPEMITRAACACVEW.

One can recognise an F-box domain in the interval 41–90; the sequence is SATIASLPDDLLLECISRVPSSSIPSLAVVCRRWSRLLHSPYFLHLRRRL. 5 Kelch repeats span residues 96–141, 152–191, 192–238, 240–295, and 367–413; these read SLFA…YGSL, RVYV…VVSG, KIYV…AVDG, FYVI…AAVG, and LLRR…CVEW.

The sequence is that of F-box/kelch-repeat protein At5g26960 from Arabidopsis thaliana (Mouse-ear cress).